We begin with the raw amino-acid sequence, 1070 residues long: uncharacterized protein (1070 aa).

5 disordered regions span residues 66–88 (EKEK…PGLE), 355–388 (DLDF…DFSN), 423–483 (EDDL…EQID), 667–692 (EELK…EETE), and 735–786 (SKTQ…NNNN). The segment covering 73 to 83 (NENTSNVNKIK) has biased composition (low complexity). Composition is skewed to basic and acidic residues over residues 435-460 (KKEE…EEYR) and 474-483 (MKMHEKEQID). A coiled-coil region spans residues 475-736 (KMHEKEQIDD…EMRLQLIRSK (262 aa)). A compositionally biased stretch (polar residues) spans 735 to 745 (SKTQGTSSTFI). The segment covering 751–765 (KHLESLKEEKKKEVK) has biased composition (basic and acidic residues). Positions 773-786 (NNNNNNNNNNNNNN) are enriched in low complexity.

This is an uncharacterized protein from Plasmodium falciparum (isolate 3D7).